A 407-amino-acid polypeptide reads, in one-letter code: uncharacterized protein (407 aa).

The stretch at 10-37 (DKLEQLANDVVTELTDMENKYKDLHVEL) forms a coiled coil.

This is an uncharacterized protein from Bacillus subtilis (strain 168).